Reading from the N-terminus, the 436-residue chain is UPF0597 protein YhaM (436 aa).

It belongs to the UPF0597 family.

The protein is UPF0597 protein YhaM of Salmonella paratyphi B (strain ATCC BAA-1250 / SPB7).